The chain runs to 81 residues: CLAVATA3/ESR (CLE)-related protein 25 (81 aa).

A signal peptide spans 1 to 30 (MGGNGIRALVGVIASLGLIVFLLVGILANS). A disordered region spans residues 57–81 (KRKVPNGPDPIHNRKAETSRRPPRV). A hydroxyproline mark is found at P61 and P64. P64 carries an O-linked (Ara...) hydroxyproline glycan. Positions 67-81 (IHNRKAETSRRPPRV) are enriched in basic and acidic residues.

The protein belongs to the CLV3/ESR signal peptide family. Post-translationally, the O-glycosylation (arabinosylation) of the hydroxyproline Pro-64 enhances binding affinity of the CLE25p peptide for its receptor. As to expression, mostly expressed in flowers and siliques, and, to a lower extent, in roots, stems, apex, seedlings, leaves and pollen.

The protein resides in the secreted. It is found in the extracellular space. In terms of biological role, extracellular signal peptide that regulates cell fate. Represses root apical meristem maintenance. Regulates the transition of protophloem cells from proliferation to differentiation, thus impinging on postembryonic growth capacity of the root meristem; this signaling pathway requires CRN and CLV2. This chain is CLAVATA3/ESR (CLE)-related protein 25, found in Arabidopsis thaliana (Mouse-ear cress).